A 249-amino-acid polypeptide reads, in one-letter code: Benzil reductase ((S)-benzoin forming) (249 aa).

6 residues coordinate NADP(+): Ile-6, Asn-87, Tyr-154, Lys-158, Val-189, and Thr-191. Tyr-154 acts as the Proton acceptor in catalysis.

The protein belongs to the short-chain dehydrogenases/reductases (SDR) family.

It is found in the cytoplasm. It carries out the reaction (S)-benzoin + NADP(+) = benzil + NADPH + H(+). It catalyses the reaction 2-hydroxy-1-phenyl-1-propanone + NADP(+) = 1-phenyl-1,2-propanedione + NADPH + H(+). With respect to regulation, inhibited by Cibacron blue 3GA, a general SDR family inhibitor. Its function is as follows. Reduces benzil stereospecifically to (S)-benzoin. Can also reduce 1-phenyl-1,2-propanedione, 1,4-naphthoquinone, 1-(4-methyl-phenyl)-2-phenyl-ethane-1,2-dione, 1-(4-fluoro-phenyl)-2-phenyl-ethane-1,2-dione, methyl benzoylformate and p-nitrobenzaldehyde in decreasing order. The sequence is that of Benzil reductase ((S)-benzoin forming) from Bacillus cereus.